The sequence spans 141 residues: uncharacterized protein (141 aa).

Positions 1-15 are cleaved as a signal peptide; the sequence is MKKVAIVGALLVLAG. Cys16 is lipidated: N-palmitoyl cysteine. Cys16 is lipidated: S-diacylglycerol cysteine.

It is found in the cell membrane. This is an uncharacterized protein from Salmonella typhimurium (strain LT2 / SGSC1412 / ATCC 700720).